Consider the following 144-residue polypeptide: Protein CT_635 (144 aa).

The disordered stretch occupies residues glutamate 110–leucine 144. Basic residues predominate over residues serine 118–leucine 144.

It belongs to the chlamydial CPn_0742/CT_635/TC_0003 family.

This is Protein CT_635 from Chlamydia trachomatis serovar D (strain ATCC VR-885 / DSM 19411 / UW-3/Cx).